We begin with the raw amino-acid sequence, 88 residues long: Small ribosomal subunit protein uS17 (88 aa).

It belongs to the universal ribosomal protein uS17 family. In terms of assembly, part of the 30S ribosomal subunit.

One of the primary rRNA binding proteins, it binds specifically to the 5'-end of 16S ribosomal RNA. The sequence is that of Small ribosomal subunit protein uS17 from Pseudomonas entomophila (strain L48).